Consider the following 356-residue polypeptide: DNA polymerase IV (356 aa).

The 182-residue stretch at 6-187 (IIHIDMDYFF…LDIGDFPGVG (182 aa)) folds into the UmuC domain. Mg(2+)-binding residues include Asp-10 and Asp-105. Glu-106 is an active-site residue.

The protein belongs to the DNA polymerase type-Y family. Monomer. Mg(2+) is required as a cofactor.

The protein localises to the cytoplasm. It catalyses the reaction DNA(n) + a 2'-deoxyribonucleoside 5'-triphosphate = DNA(n+1) + diphosphate. In terms of biological role, poorly processive, error-prone DNA polymerase involved in untargeted mutagenesis. Copies undamaged DNA at stalled replication forks, which arise in vivo from mismatched or misaligned primer ends. These misaligned primers can be extended by PolIV. Exhibits no 3'-5' exonuclease (proofreading) activity. May be involved in translesional synthesis, in conjunction with the beta clamp from PolIII. The sequence is that of DNA polymerase IV from Staphylococcus aureus (strain COL).